A 233-amino-acid polypeptide reads, in one-letter code: Lipoprotein-releasing system ATP-binding protein LolD (233 aa).

One can recognise an ABC transporter domain in the interval 6 to 233 (LQCDNLCKRY…TAELSLMGAE (228 aa)). 42-49 (GSSGSGKS) is a binding site for ATP.

This sequence belongs to the ABC transporter superfamily. Lipoprotein translocase (TC 3.A.1.125) family. As to quaternary structure, the complex is composed of two ATP-binding proteins (LolD) and two transmembrane proteins (LolC and LolE).

It localises to the cell inner membrane. Its function is as follows. Part of the ABC transporter complex LolCDE involved in the translocation of mature outer membrane-directed lipoproteins, from the inner membrane to the periplasmic chaperone, LolA. Responsible for the formation of the LolA-lipoprotein complex in an ATP-dependent manner. In Shigella flexneri, this protein is Lipoprotein-releasing system ATP-binding protein LolD.